Consider the following 292-residue polypeptide: Acetyl-coenzyme A carboxylase carboxyl transferase subunit beta (292 aa).

Residues 35–292 (VFSQCEQCNS…LKLHAKKVTS (258 aa)) enclose the CoA carboxyltransferase N-terminal domain. 4 residues coordinate Zn(2+): Cys-39, Cys-42, Cys-58, and Cys-61. The C4-type zinc finger occupies 39 to 61 (CEQCNSAIYNKDLEHNYEVCPYC).

The protein belongs to the AccD/PCCB family. In terms of assembly, acetyl-CoA carboxylase is a heterohexamer composed of biotin carboxyl carrier protein (AccB), biotin carboxylase (AccC) and two subunits each of ACCase subunit alpha (AccA) and ACCase subunit beta (AccD). Requires Zn(2+) as cofactor.

The protein resides in the cytoplasm. The catalysed reaction is N(6)-carboxybiotinyl-L-lysyl-[protein] + acetyl-CoA = N(6)-biotinyl-L-lysyl-[protein] + malonyl-CoA. It functions in the pathway lipid metabolism; malonyl-CoA biosynthesis; malonyl-CoA from acetyl-CoA: step 1/1. In terms of biological role, component of the acetyl coenzyme A carboxylase (ACC) complex. Biotin carboxylase (BC) catalyzes the carboxylation of biotin on its carrier protein (BCCP) and then the CO(2) group is transferred by the transcarboxylase to acetyl-CoA to form malonyl-CoA. This is Acetyl-coenzyme A carboxylase carboxyl transferase subunit beta from Acholeplasma laidlawii (strain PG-8A).